Consider the following 1496-residue polypeptide: Carbamoyl-phosphate synthase [ammonia], mitochondrial (1496 aa).

Residues 1-33 (MTRILSVFKTAKTGVLNAAAHRYRGFSKAGVRL) constitute a mitochondrion transit peptide. Positions 34–214 (MSVKAQTANL…TKVFGKGNPV (181 aa)) are anthranilate phosphoribosyltransferase homolog. The Glutamine amidotransferase type-1 domain maps to 215–401 (RIVAVDCGVK…MSLIKKGKGT (187 aa)). Residue cysteine 290 is the For GATase activity of the active site. 2 consecutive ATP-grasp domains span residues 548-740 (SDKL…KIAL) and 1090-1281 (SAVL…KVMI). An MGS-like domain is found at 1352 to 1496 (FKLPQKGILI…YRQFGGAKPS (145 aa)). The N-acetyl-L-glutamate site is built by threonine 1388, threonine 1391, tryptophan 1407, asparagine 1433, asparagine 1436, and asparagine 1445.

It localises to the mitochondrion. It carries out the reaction hydrogencarbonate + NH4(+) + 2 ATP = carbamoyl phosphate + 2 ADP + phosphate + 2 H(+). Requires N-acetyl-L-glutamate (NAG) as an allosteric activator. Functionally, involved in the urea cycle of ureotelic animals where the enzyme plays an important role in removing excess ammonia from the cell. This is Carbamoyl-phosphate synthase [ammonia], mitochondrial from Aquarana catesbeiana (American bullfrog).